The chain runs to 179 residues: Large ribosomal subunit protein uL5 (179 aa).

The protein belongs to the universal ribosomal protein uL5 family. In terms of assembly, part of the 50S ribosomal subunit; part of the 5S rRNA/L5/L18/L25 subcomplex. Contacts the 5S rRNA and the P site tRNA. Forms a bridge to the 30S subunit in the 70S ribosome.

Functionally, this is one of the proteins that bind and probably mediate the attachment of the 5S RNA into the large ribosomal subunit, where it forms part of the central protuberance. In the 70S ribosome it contacts protein S13 of the 30S subunit (bridge B1b), connecting the 2 subunits; this bridge is implicated in subunit movement. Contacts the P site tRNA; the 5S rRNA and some of its associated proteins might help stabilize positioning of ribosome-bound tRNAs. The protein is Large ribosomal subunit protein uL5 of Acidovorax ebreus (strain TPSY) (Diaphorobacter sp. (strain TPSY)).